The following is a 1002-amino-acid chain: Protein SMAX1-LIKE 7 (1002 aa).

The Clp R domain maps to 8–185 (ARQCLTEETA…DVLHPPVTSQ (178 aa)). Repeat regions lie at residues 12–86 (LTEE…LDRL) and 103–185 (VSNS…VTSQ). The short motif at 854–858 (LDLNL) is the EAR element.

It belongs to the ClpA/ClpB family. Interacts with TPL/TPR in an EAR-motif dependent manner. Interacts with TPL, TPR1, TPR2 and TPR4. Interacts with MAX2 and TPR2. Interacts with D14. The interaction with D14 occurs in the presence of (2'R) stereoisomers of strigolactones, but not (2'S) stereoisomers. Ubiquitinated upon strigolactone treatment. Strigolactone, but not karrikin, triggers rapid SCF(MAX2)-dependent degradation. Expressed in axillary branches and roots. Detected in seedlings and leaves. Expressed in the primary rosette buds and expanding leaves of adult rosettes, the vasculature of the hypocotyls, cotyledons, and mature roots, and in the midvein and petioles of young leaves.

It localises to the nucleus. Probable component of a transcriptional corepressor complex involved in branching control. Regulates cotyledon expansion and lateral root growth, but not germination or hypocotyl elongation. Promotes auxin transport and PIN1 accumulation in the stem and represses BRC1/TCP18 expression in axillary buds. This Arabidopsis thaliana (Mouse-ear cress) protein is Protein SMAX1-LIKE 7.